The sequence spans 194 residues: Dihydrofolate reductase HdrB (194 aa).

A DHFR domain is found at 18 to 194; it reads RFVLVAAVAD…ADRGAEESDE (177 aa). Residues alanine 24 and 30–36 contribute to the NADP(+) site; that span reads VIGRDGT. Residue aspartate 44 participates in substrate binding. 62–63 lines the NADP(+) pocket; it reads KT. Substrate is bound by residues arginine 69 and arginine 78. NADP(+)-binding positions include 84–85 and 123–130; these read TT and GGATVYEQ. A substrate-binding site is contributed by threonine 141. The disordered stretch occupies residues 173–194; sequence SFVTYERKQPAAADRGAEESDE.

This sequence belongs to the dihydrofolate reductase family.

It catalyses the reaction (6S)-5,6,7,8-tetrahydrofolate + NADP(+) = 7,8-dihydrofolate + NADPH + H(+). The protein operates within cofactor biosynthesis; tetrahydrofolate biosynthesis; 5,6,7,8-tetrahydrofolate from 7,8-dihydrofolate: step 1/1. With respect to regulation, maximum activity at KCl concentration of 0.5 M and activity decreases with increasing concentration of KCl. Key enzyme in folate metabolism. Catalyzes an essential reaction for de novo glycine and purine synthesis, and for DNA precursor synthesis. This is Dihydrofolate reductase HdrB (hdrB) from Haloferax volcanii (Halobacterium volcanii).